A 395-amino-acid chain; its full sequence is uncharacterized protein (395 aa).

8 consecutive transmembrane segments (helical) span residues 15-35, 56-76, 86-106, 131-151, 175-195, 254-274, 298-318, and 348-368; these read ILAF…VTVF, WPWI…NIII, FHAP…FQIV, AVLL…LITW, WFSF…IFIA, LANI…FAIV, IAIT…TQFV, and VYIP…QVVI.

Its subcellular location is the cell membrane. This is an uncharacterized protein from Mycoplasma pneumoniae (strain ATCC 29342 / M129 / Subtype 1) (Mycoplasmoides pneumoniae).